Reading from the N-terminus, the 304-residue chain is Ribonuclease Z (304 aa).

Zn(2+) contacts are provided by H63, H65, D67, H68, H143, D213, and H271. Catalysis depends on D67, which acts as the Proton acceptor.

It belongs to the RNase Z family. Homodimer. Zn(2+) is required as a cofactor.

The enzyme catalyses Endonucleolytic cleavage of RNA, removing extra 3' nucleotides from tRNA precursor, generating 3' termini of tRNAs. A 3'-hydroxy group is left at the tRNA terminus and a 5'-phosphoryl group is left at the trailer molecule.. Functionally, zinc phosphodiesterase, which displays some tRNA 3'-processing endonuclease activity. Probably involved in tRNA maturation, by removing a 3'-trailer from precursor tRNA. The chain is Ribonuclease Z from Porphyromonas gingivalis (strain ATCC BAA-308 / W83).